The chain runs to 71 residues: Peptide Ctri10261 (71 aa).

A signal peptide spans 1 to 23 (MKIPLILVTIAIILLMVPTESDA). Phe-37 is subject to Phenylalanine amide. Positions 41–71 (SLKNRDYFDYMQDPSLSNADLRELEELLEDY) are excised as a propeptide.

This sequence belongs to the non-disulfide-bridged peptide (NDBP) superfamily. Short antimicrobial peptide (group 4) family. As to expression, expressed by the venom gland.

It localises to the secreted. Its function is as follows. Antimicrobial peptide. This is Peptide Ctri10261 from Chaerilus tricostatus (Scorpion).